The sequence spans 370 residues: 3-isopropylmalate dehydrogenase (370 aa).

77-90 (GPKWDSVPYEVRPE) is a binding site for NAD(+). R97, R107, R135, and D226 together coordinate substrate. The Mg(2+) site is built by D226, D250, and D254. 290–302 (GSAPDIAGKGIAN) is an NAD(+) binding site.

It belongs to the isocitrate and isopropylmalate dehydrogenases family. LeuB type 1 subfamily. As to quaternary structure, homodimer. Mg(2+) is required as a cofactor. The cofactor is Mn(2+).

The protein localises to the cytoplasm. The catalysed reaction is (2R,3S)-3-isopropylmalate + NAD(+) = 4-methyl-2-oxopentanoate + CO2 + NADH. The protein operates within amino-acid biosynthesis; L-leucine biosynthesis; L-leucine from 3-methyl-2-oxobutanoate: step 3/4. Catalyzes the oxidation of 3-carboxy-2-hydroxy-4-methylpentanoate (3-isopropylmalate) to 3-carboxy-4-methyl-2-oxopentanoate. The product decarboxylates to 4-methyl-2 oxopentanoate. This Rhizobium johnstonii (strain DSM 114642 / LMG 32736 / 3841) (Rhizobium leguminosarum bv. viciae) protein is 3-isopropylmalate dehydrogenase.